Consider the following 513-residue polypeptide: Bifunctional purine biosynthesis protein PurH (513 aa).

The 145-residue stretch at 1-145 folds into the MGS-like domain; the sequence is MTKRALISVS…KNYQDVTAVV (145 aa).

The protein belongs to the PurH family.

It carries out the reaction (6R)-10-formyltetrahydrofolate + 5-amino-1-(5-phospho-beta-D-ribosyl)imidazole-4-carboxamide = 5-formamido-1-(5-phospho-D-ribosyl)imidazole-4-carboxamide + (6S)-5,6,7,8-tetrahydrofolate. The enzyme catalyses IMP + H2O = 5-formamido-1-(5-phospho-D-ribosyl)imidazole-4-carboxamide. The protein operates within purine metabolism; IMP biosynthesis via de novo pathway; 5-formamido-1-(5-phospho-D-ribosyl)imidazole-4-carboxamide from 5-amino-1-(5-phospho-D-ribosyl)imidazole-4-carboxamide (10-formyl THF route): step 1/1. It participates in purine metabolism; IMP biosynthesis via de novo pathway; IMP from 5-formamido-1-(5-phospho-D-ribosyl)imidazole-4-carboxamide: step 1/1. In Enterococcus faecalis (strain ATCC 700802 / V583), this protein is Bifunctional purine biosynthesis protein PurH.